The primary structure comprises 457 residues: tRNA-2-methylthio-N(6)-dimethylallyladenosine synthase (457 aa).

Residues K3–A120 enclose the MTTase N-terminal domain. Residues C12, C49, C83, C157, C161, and C164 each coordinate [4Fe-4S] cluster. Residues R143 to R377 enclose the Radical SAM core domain. Positions Q380–L447 constitute a TRAM domain.

Belongs to the methylthiotransferase family. MiaB subfamily. As to quaternary structure, monomer. [4Fe-4S] cluster is required as a cofactor.

Its subcellular location is the cytoplasm. The enzyme catalyses N(6)-dimethylallyladenosine(37) in tRNA + (sulfur carrier)-SH + AH2 + 2 S-adenosyl-L-methionine = 2-methylsulfanyl-N(6)-dimethylallyladenosine(37) in tRNA + (sulfur carrier)-H + 5'-deoxyadenosine + L-methionine + A + S-adenosyl-L-homocysteine + 2 H(+). Functionally, catalyzes the methylthiolation of N6-(dimethylallyl)adenosine (i(6)A), leading to the formation of 2-methylthio-N6-(dimethylallyl)adenosine (ms(2)i(6)A) at position 37 in tRNAs that read codons beginning with uridine. The protein is tRNA-2-methylthio-N(6)-dimethylallyladenosine synthase of Burkholderia cenocepacia (strain HI2424).